Here is a 124-residue protein sequence, read N- to C-terminus: NADH dehydrogenase [ubiquinone] iron-sulfur protein 6, mitochondrial (124 aa).

The transit peptide at 1–28 (MAAVLTFLRFLGRGGAVTRGLPGGARCF) directs the protein to the mitochondrion.

The protein belongs to the complex I NDUFS6 subunit family. As to quaternary structure, mammalian complex I is composed of 45 different subunits. This is a component of the iron-sulfur (IP) fragment of the enzyme.

Its subcellular location is the mitochondrion inner membrane. Accessory subunit of the mitochondrial membrane respiratory chain NADH dehydrogenase (Complex I), that is believed not to be involved in catalysis. Complex I functions in the transfer of electrons from NADH to the respiratory chain. The immediate electron acceptor for the enzyme is believed to be ubiquinone. The sequence is that of NADH dehydrogenase [ubiquinone] iron-sulfur protein 6, mitochondrial (NDUFS6) from Bos taurus (Bovine).